The chain runs to 121 residues: NAD(P)H-quinone oxidoreductase subunit 3, chloroplastic (121 aa).

3 consecutive transmembrane segments (helical) span residues 10-30, 65-85, and 90-110; these read FFIFLLLASVIPILAFSISKF, MFALVFVIFDVETVFLYPWAM, and LGLSAFIEALVFVFILIIGLV.

It belongs to the complex I subunit 3 family. As to quaternary structure, NDH is composed of at least 16 different subunits, 5 of which are encoded in the nucleus.

It is found in the plastid. The protein resides in the chloroplast thylakoid membrane. The catalysed reaction is a plastoquinone + NADH + (n+1) H(+)(in) = a plastoquinol + NAD(+) + n H(+)(out). The enzyme catalyses a plastoquinone + NADPH + (n+1) H(+)(in) = a plastoquinol + NADP(+) + n H(+)(out). NDH shuttles electrons from NAD(P)H:plastoquinone, via FMN and iron-sulfur (Fe-S) centers, to quinones in the photosynthetic chain and possibly in a chloroplast respiratory chain. The immediate electron acceptor for the enzyme in this species is believed to be plastoquinone. Couples the redox reaction to proton translocation, and thus conserves the redox energy in a proton gradient. The sequence is that of NAD(P)H-quinone oxidoreductase subunit 3, chloroplastic from Physcomitrium patens (Spreading-leaved earth moss).